Consider the following 449-residue polypeptide: Tryptophan synthase beta chain 2 (449 aa).

An N6-(pyridoxal phosphate)lysine modification is found at Lys-116.

The protein belongs to the TrpB family. In terms of assembly, tetramer of two alpha and two beta chains. Requires pyridoxal 5'-phosphate as cofactor.

The enzyme catalyses (1S,2R)-1-C-(indol-3-yl)glycerol 3-phosphate + L-serine = D-glyceraldehyde 3-phosphate + L-tryptophan + H2O. It participates in amino-acid biosynthesis; L-tryptophan biosynthesis; L-tryptophan from chorismate: step 5/5. Functionally, the beta subunit is responsible for the synthesis of L-tryptophan from indole and L-serine. This chain is Tryptophan synthase beta chain 2 (trpB2), found in Aeropyrum pernix (strain ATCC 700893 / DSM 11879 / JCM 9820 / NBRC 100138 / K1).